The primary structure comprises 502 residues: Lysine--tRNA ligase (502 aa).

Residues Glu-413 and Glu-420 each contribute to the Mg(2+) site.

Belongs to the class-II aminoacyl-tRNA synthetase family. As to quaternary structure, homodimer. Mg(2+) serves as cofactor.

It localises to the cytoplasm. It carries out the reaction tRNA(Lys) + L-lysine + ATP = L-lysyl-tRNA(Lys) + AMP + diphosphate. In Haemophilus influenzae (strain PittEE), this protein is Lysine--tRNA ligase.